The following is a 159-amino-acid chain: Neuroglobin-1 (159 aa).

Positions Lys-3 to Ala-151 constitute a Globin domain. Heme b-binding residues include His-66 and His-98.

The protein belongs to the globin family. Monomer. Homodimers and homotetramers. Mainly monomeric but also detected as part of homodimers and homotetramers.

The protein resides in the cytoplasm. The protein localises to the cytosol. Its subcellular location is the mitochondrion matrix. The enzyme catalyses Fe(III)-heme b-[protein] + nitric oxide + H2O = Fe(II)-heme b-[protein] + nitrite + 2 H(+). In terms of biological role, monomeric globin with a bis-histidyl six-coordinate heme-iron atom through which it can bind dioxygen, carbon monoxide and nitric oxide. Could help transport oxygen and increase its availability to the metabolically active neuronal tissues, though its low quantity in tissues as well as its high affinity for dioxygen, which may limit its oxygen-releasing ability, argue against it. The ferrous/deoxygenated form exhibits a nitrite reductase activity and it could produce nitric oxide which in turn inhibits cellular respiration in response to hypoxia. In its ferrous/deoxygenated state, it may also exhibit GDI (Guanine nucleotide Dissociation Inhibitor) activity toward heterotrimeric G-alpha proteins, thereby regulating signal transduction to facilitate neuroprotective responses in the wake of hypoxia and associated oxidative stress. The polypeptide is Neuroglobin-1 (ngb1) (Oncorhynchus mykiss (Rainbow trout)).